Here is a 779-residue protein sequence, read N- to C-terminus: Transcriptional regulator QRICH1 (779 aa).

At methionine 1 the chain carries N-acetylmethionine. The region spanning 6–48 is the CARD domain; sequence ENTISFEEYIRVKARSVPQHRMKEFLDSLASKGPEALQEFQQT. Disordered stretches follow at residues 141–163 and 219–242; these read QGQA…PSPS and ALSP…TASV. Serine 346 bears the Phosphoserine mark. Glycyl lysine isopeptide (Lys-Gly) (interchain with G-Cter in SUMO2) cross-links involve residues lysine 354 and lysine 359. Positions 420-430 are enriched in low complexity; sequence QQQPQQQTPQE. The tract at residues 420-443 is disordered; it reads QQQPQQQTPQEQTPPPPQQQQQQQ. A Phosphoserine modification is found at serine 467.

Its subcellular location is the nucleus. The protein localises to the cytoplasm. It is found in the cell membrane. Its function is as follows. Transcriptional regulator that acts as a mediator of the integrated stress response (ISR) through transcriptional control of protein homeostasis under conditions of ER stress. Controls the outcome of the unfolded protein response (UPR), an ER-stress response pathway that either promotes recovery of ER homeostasis and cell survival, or triggers the terminal UPR which elicits programmed cell death when ER stress is prolonged and unresolved. ER stress induces QRICH1 translation by a ribosome translation re-initiation mechanism in response to EIF2S1/eIF-2-alpha phosphorylation, and stress-induced QRICH1 regulates a transcriptional program associated with protein translation, protein secretion-mediated proteotoxicity and cell death during the terminal UPR. May cooperate with ATF4 transcription factor signaling to regulate ER homeostasis which is critical for cell viability. Up-regulates CASP3/caspase-3 activity in epithelial cells under ER stress. Central regulator of proteotoxicity associated with ER stress-mediated inflammatory diseases in the intestines and liver. Involved in chondrocyte hypertrophy, a process required for normal longitudinal bone growth. The protein is Transcriptional regulator QRICH1 (QRICH1) of Bos taurus (Bovine).